Reading from the N-terminus, the 130-residue chain is Neelaredoxin (130 aa).

Positions 15, 17, 45, 51, 115, and 118 each coordinate Fe cation.

The protein belongs to the desulfoferrodoxin family. As to quaternary structure, monomer. It depends on Fe cation as a cofactor.

It carries out the reaction 2 superoxide + 2 H(+) = H2O2 + O2. In terms of biological role, non-heme iron protein. This is Neelaredoxin (nlr) from Megalodesulfovibrio gigas (Desulfovibrio gigas).